Here is a 585-residue protein sequence, read N- to C-terminus: Testis-specific serine kinase substrate (585 aa).

A compositionally biased stretch (low complexity) spans 91–108; the sequence is EPDSSGTDSTTEDSGPLA. The tract at residues 91 to 126 is disordered; sequence EPDSSGTDSTTEDSGPLALPGPPASPTTPWAPEDPD. 3 positions are modified to phosphoserine: Ser224, Ser281, and Ser309. 2 disordered regions span residues 262 to 309 and 559 to 585; these read SRHG…PSLS and LEGS…GSEQ.

Post-translationally, phosphorylated on serine residue(s) by STK22A/TSSK1 and STK22B/TSSK2.

It localises to the cytoplasm. The protein resides in the cytoskeleton. Its subcellular location is the microtubule organizing center. It is found in the centrosome. The protein localises to the centriole. In terms of biological role, may play a role in testicular physiology, most probably in the process of spermatogenesis or spermatid development. The chain is Testis-specific serine kinase substrate (Tsks) from Rattus norvegicus (Rat).